The primary structure comprises 429 residues: Serine hydroxymethyltransferase (429 aa).

(6S)-5,6,7,8-tetrahydrofolate contacts are provided by residues Leu-133 and 137–139; that span reads GHL. Lys-243 carries the N6-(pyridoxal phosphate)lysine modification. A (6S)-5,6,7,8-tetrahydrofolate-binding site is contributed by Glu-259.

This sequence belongs to the SHMT family. In terms of assembly, homodimer. Pyridoxal 5'-phosphate is required as a cofactor.

Its subcellular location is the cytoplasm. The catalysed reaction is (6R)-5,10-methylene-5,6,7,8-tetrahydrofolate + glycine + H2O = (6S)-5,6,7,8-tetrahydrofolate + L-serine. The protein operates within one-carbon metabolism; tetrahydrofolate interconversion. It functions in the pathway amino-acid biosynthesis; glycine biosynthesis; glycine from L-serine: step 1/1. Its function is as follows. Catalyzes the reversible interconversion of serine and glycine with tetrahydrofolate (THF) serving as the one-carbon carrier. This reaction serves as the major source of one-carbon groups required for the biosynthesis of purines, thymidylate, methionine, and other important biomolecules. Also exhibits THF-independent aldolase activity toward beta-hydroxyamino acids, producing glycine and aldehydes, via a retro-aldol mechanism. The polypeptide is Serine hydroxymethyltransferase (Aster yellows witches'-broom phytoplasma (strain AYWB)).